Consider the following 261-residue polypeptide: Carbonic anhydrase 1 (261 aa).

An N-acetylalanine modification is found at alanine 2. The 258-residue stretch at 4–261 folds into the Alpha-carbonic anhydrase domain; the sequence is SDWGYDSPNG…LKGRTVRAFF (258 aa). Catalysis depends on histidine 65, which acts as the Proton donor/acceptor. Zn(2+) contacts are provided by histidine 95, histidine 97, and histidine 120. Substrate-binding positions include threonine 200 and 200 to 201; that span reads TH.

It belongs to the alpha-carbonic anhydrase family. It depends on Zn(2+) as a cofactor.

The protein resides in the cytoplasm. The enzyme catalyses hydrogencarbonate + H(+) = CO2 + H2O. It catalyses the reaction urea = cyanamide + H2O. Inhibited by acetazolamide. Catalyzes the reversible hydration of carbon dioxide. Can hydrate cyanamide to urea. This chain is Carbonic anhydrase 1 (CA1), found in Equus caballus (Horse).